Consider the following 243-residue polypeptide: Adenylate dimethylallyltransferase (243 aa).

The enzyme catalyses dimethylallyl diphosphate + AMP = N(6)-(dimethylallyl)adenosine 5'-phosphate + diphosphate. Transfers dimethylallyl groups to AMP as part of the biosynthesis of cytokinin phytohormones. This chain is Adenylate dimethylallyltransferase (tzs), found in Agrobacterium fabrum (strain C58 / ATCC 33970) (Agrobacterium tumefaciens (strain C58)).